The sequence spans 341 residues: Eukaryotic translation initiation factor 3 subunit I (341 aa).

WD repeat units follow at residues 8–47 (GHER…RLGT), 56–95 (GHNG…CLYT), 151–190 (LSGS…EVQA), 194–233 (EHSA…VMKV), 235–274 (TTET…GKFE), and 291–331 (GHFG…RSRP).

The protein belongs to the eIF-3 subunit I family. In terms of assembly, component of the eukaryotic translation initiation factor 3 (eIF-3) complex.

It localises to the cytoplasm. In terms of biological role, component of the eukaryotic translation initiation factor 3 (eIF-3) complex, which is involved in protein synthesis of a specialized repertoire of mRNAs and, together with other initiation factors, stimulates binding of mRNA and methionyl-tRNAi to the 40S ribosome. The eIF-3 complex specifically targets and initiates translation of a subset of mRNAs involved in cell proliferation. The chain is Eukaryotic translation initiation factor 3 subunit I from Cryptococcus neoformans var. neoformans serotype D (strain B-3501A) (Filobasidiella neoformans).